Here is a 361-residue protein sequence, read N- to C-terminus: Cilia- and flagella-associated protein 263 (361 aa).

Belongs to the CFAP263 family. As to quaternary structure, forms a complex with CFAP184; the interaction is required for functional activity in cilia.

Its subcellular location is the cell projection. It is found in the cilium. In complex with CFAP263, acts as a regulator of ciliary beating that connects radial spoke 3 (RS3) to the inner dynein arm (IDA) and the nexin-dynein regulatory complex (N-DRC). The complex is positioned parallel to N-DRC and forms a connection between the arch at the base of RS3, the IDA tail and N-DRC. The protein is Cilia- and flagella-associated protein 263 (CFAP263) of Tetrahymena thermophila (strain SB210).